The following is a 294-amino-acid chain: Acetylglutamate kinase (294 aa).

Substrate is bound by residues 69 to 70, Arg-91, and Asn-190; that span reads GG.

This sequence belongs to the acetylglutamate kinase family. ArgB subfamily.

It localises to the cytoplasm. The catalysed reaction is N-acetyl-L-glutamate + ATP = N-acetyl-L-glutamyl 5-phosphate + ADP. Its pathway is amino-acid biosynthesis; L-arginine biosynthesis; N(2)-acetyl-L-ornithine from L-glutamate: step 2/4. Its function is as follows. Catalyzes the ATP-dependent phosphorylation of N-acetyl-L-glutamate. In Mycobacterium tuberculosis (strain CDC 1551 / Oshkosh), this protein is Acetylglutamate kinase.